The following is a 294-amino-acid chain: Lipoyl synthase (294 aa).

C35, C40, C46, C61, C65, C68, and S275 together coordinate [4Fe-4S] cluster. The Radical SAM core domain occupies 46 to 264 (CWGGGTATVM…REAGLGLGFR (219 aa)).

This sequence belongs to the radical SAM superfamily. Lipoyl synthase family. It depends on [4Fe-4S] cluster as a cofactor.

It is found in the cytoplasm. It carries out the reaction [[Fe-S] cluster scaffold protein carrying a second [4Fe-4S](2+) cluster] + N(6)-octanoyl-L-lysyl-[protein] + 2 oxidized [2Fe-2S]-[ferredoxin] + 2 S-adenosyl-L-methionine + 4 H(+) = [[Fe-S] cluster scaffold protein] + N(6)-[(R)-dihydrolipoyl]-L-lysyl-[protein] + 4 Fe(3+) + 2 hydrogen sulfide + 2 5'-deoxyadenosine + 2 L-methionine + 2 reduced [2Fe-2S]-[ferredoxin]. It participates in protein modification; protein lipoylation via endogenous pathway; protein N(6)-(lipoyl)lysine from octanoyl-[acyl-carrier-protein]: step 2/2. Functionally, catalyzes the radical-mediated insertion of two sulfur atoms into the C-6 and C-8 positions of the octanoyl moiety bound to the lipoyl domains of lipoate-dependent enzymes, thereby converting the octanoylated domains into lipoylated derivatives. The protein is Lipoyl synthase of Anaeromyxobacter sp. (strain Fw109-5).